The primary structure comprises 78 residues: Acyl carrier protein (78 aa).

Residues 2–77 form the Carrier domain; the sequence is STIEERVKKI…AAIDYINGHQ (76 aa). Ser37 is modified (O-(pantetheine 4'-phosphoryl)serine).

It belongs to the acyl carrier protein (ACP) family. In terms of processing, 4'-phosphopantetheine is transferred from CoA to a specific serine of apo-ACP by AcpS. This modification is essential for activity because fatty acids are bound in thioester linkage to the sulfhydryl of the prosthetic group.

Its subcellular location is the cytoplasm. The protein operates within lipid metabolism; fatty acid biosynthesis. In terms of biological role, carrier of the growing fatty acid chain in fatty acid biosynthesis. The chain is Acyl carrier protein from Erwinia tasmaniensis (strain DSM 17950 / CFBP 7177 / CIP 109463 / NCPPB 4357 / Et1/99).